Here is a 186-residue protein sequence, read N- to C-terminus: FMN reductase (NADPH) (186 aa).

This sequence belongs to the SsuE family.

It catalyses the reaction FMNH2 + NADP(+) = FMN + NADPH + 2 H(+). In Pseudomonas aeruginosa (strain ATCC 15692 / DSM 22644 / CIP 104116 / JCM 14847 / LMG 12228 / 1C / PRS 101 / PAO1), this protein is FMN reductase (NADPH) (msuE).